The sequence spans 341 residues: Coiled-coil domain-containing protein 86 (341 aa).

The disordered stretch occupies residues 1-341 (MGTPLRRSRR…QPPQRPVAKV (341 aa)). Ser18 is subject to Phosphoserine. Over residues 26-49 (EVSRAKRALVDFKSNPEETRELES) the composition is skewed to basic and acidic residues. Position 59 is a phosphoserine (Ser59). Low complexity predominate over residues 64 to 73 (PETSPESPCP). Thr66 bears the Phosphothreonine mark. A phosphoserine mark is found at Ser67, Ser70, Ser81, Ser92, Ser103, Ser114, and Ser124. Over residues 105–114 (AGQTESNPES) the composition is skewed to polar residues. The span at 130 to 139 (EVAHAKEEVI) shows a compositional bias: basic and acidic residues. Phosphoserine is present on residues Ser142, Ser169, Ser170, and Ser200. The span at 219-235 (GKPKSGRVWKDRSKKRF) shows a compositional bias: basic residues. Positions 254 to 298 (ERQERKLAKDFARHLEEEKQRRRQEKKERRAENLRRRLENERKAE) are enriched in basic and acidic residues. A coiled-coil region spans residues 261-304 (AKDFARHLEEEKQRRRQEKKERRAENLRRRLENERKAEIVQVIR). The segment covering 307 to 317 (AKLKKAKKKQL) has biased composition (basic residues). Arg323 bears the Citrulline mark.

Citrullinated by PADI4.

The protein localises to the nucleus. It localises to the chromosome. Its subcellular location is the nucleolus. Its function is as follows. Required for proper chromosome segregation during mitosis and error-free mitotic progression. The polypeptide is Coiled-coil domain-containing protein 86 (Rattus norvegicus (Rat)).